A 211-amino-acid polypeptide reads, in one-letter code: MNQIIFSQFGTPIERVEIALQALRHGRGVLVLDNEDRENEGDMIFAAEKMTIEQMALAIRYGSGIICLCLTEERRQQLELPMMVEHNTSHYQTAFTVTIEAAEGVTTGVSAADRITTIRTAIKNDAIPEDLNRPGHVFPLLAQPGGVLNRGGHTEAAIDLTLLAGLKPAGVLCEVTNEDGSMARALEIIAFSNQHNMPVLTINDLVAYRSR.

Residues 37–38, Asp-42, 150–154, and Glu-174 each bind D-ribulose 5-phosphate; these read RE and RGGHT. Glu-38 contacts Mg(2+). His-153 is a binding site for Mg(2+).

The protein belongs to the DHBP synthase family. In terms of assembly, homodimer. Requires Mg(2+) as cofactor. Mn(2+) serves as cofactor.

It catalyses the reaction D-ribulose 5-phosphate = (2S)-2-hydroxy-3-oxobutyl phosphate + formate + H(+). It functions in the pathway cofactor biosynthesis; riboflavin biosynthesis; 2-hydroxy-3-oxobutyl phosphate from D-ribulose 5-phosphate: step 1/1. Its function is as follows. Catalyzes the conversion of D-ribulose 5-phosphate to formate and 3,4-dihydroxy-2-butanone 4-phosphate. This chain is 3,4-dihydroxy-2-butanone 4-phosphate synthase, found in Baumannia cicadellinicola subsp. Homalodisca coagulata.